The sequence spans 358 residues: UDP-N-acetylglucosamine--N-acetylmuramyl-(pentapeptide) pyrophosphoryl-undecaprenol N-acetylglucosamine transferase (358 aa).

UDP-N-acetyl-alpha-D-glucosamine is bound by residues 11 to 13, Arg163, Ser191, Ile245, and Gln290; that span reads TGG.

It belongs to the glycosyltransferase 28 family. MurG subfamily.

It is found in the cell inner membrane. The enzyme catalyses di-trans,octa-cis-undecaprenyl diphospho-N-acetyl-alpha-D-muramoyl-L-alanyl-D-glutamyl-meso-2,6-diaminopimeloyl-D-alanyl-D-alanine + UDP-N-acetyl-alpha-D-glucosamine = di-trans,octa-cis-undecaprenyl diphospho-[N-acetyl-alpha-D-glucosaminyl-(1-&gt;4)]-N-acetyl-alpha-D-muramoyl-L-alanyl-D-glutamyl-meso-2,6-diaminopimeloyl-D-alanyl-D-alanine + UDP + H(+). The protein operates within cell wall biogenesis; peptidoglycan biosynthesis. Functionally, cell wall formation. Catalyzes the transfer of a GlcNAc subunit on undecaprenyl-pyrophosphoryl-MurNAc-pentapeptide (lipid intermediate I) to form undecaprenyl-pyrophosphoryl-MurNAc-(pentapeptide)GlcNAc (lipid intermediate II). The chain is UDP-N-acetylglucosamine--N-acetylmuramyl-(pentapeptide) pyrophosphoryl-undecaprenol N-acetylglucosamine transferase from Janthinobacterium sp. (strain Marseille) (Minibacterium massiliensis).